Reading from the N-terminus, the 70-residue chain is Small, acid-soluble spore protein 1 (70 aa).

The protein belongs to the alpha/beta-type SASP family.

Its function is as follows. SASP are bound to spore DNA. They are double-stranded DNA-binding proteins that cause DNA to change to an a-like conformation. They protect the DNA backbone from chemical and enzymatic cleavage and are thus involved in dormant spore's high resistance to UV light. The protein is Small, acid-soluble spore protein 1 (sasP-1) of Bacillus cereus.